The following is a 174-amino-acid chain: Regenerating islet-derived protein 3-alpha (174 aa).

Positions 1–25 (MLPRLSFNNVSWTLLYYLFIFQVRG) are cleaved as a signal peptide. A propeptide spanning residues 26–36 (EDSQKAVPSTR) is cleaved from the precursor. Disulfide bonds link Cys-39/Cys-50, Cys-67/Cys-170, and Cys-145/Cys-162. A C-type lectin domain is found at 46 to 171 (YRSYCYTLVT…CDVELPFVCK (126 aa)). Positions 102–117 (WIWLHDPTMGQQPNGG) are sufficient to activate EXTL3. Zn(2+) is bound by residues His-106 and Glu-120.

As to quaternary structure, forms a hexameric membrane-permeabilizing oligomeric pore on membrane phospholipids. The hexamer is formed by three dimers related by helical symmetry. Forms filaments, filamentation traps pore complexes and limits damage to host cells. Interacts with EXTL3. Proteolytic processing by trypsin removes an inhibitory N-terminal propeptide and is essential for peptidoglycan binding and antibacterial activity. Low expression found in healthy pancreas.

The protein localises to the secreted. In terms of biological role, bactericidal C-type lectin. The lack of the EPN motif may explain its inability to bind peptidoglycan. Its function is as follows. Acts as a hormone in response to different stimuli like anti-inflammatory signals, such as IL17A, or gut microbiome. Secreted by different cell types to activate its receptor EXTL3 and induce cell specific signaling pathways. Induced by IL17A in keratinocytes, regulates keratinocyte proliferation and differentiation after skin injury via activation of EXTL3-PI3K-AKT signaling pathway. In parallel, inhibits skin inflammation through the inhibition of inflammatory cytokines such as IL6 and TNF. In pancreas, is able to permealize beta-cells membrane and stimulate their proliferation. The sequence is that of Regenerating islet-derived protein 3-alpha (Reg3a) from Rattus norvegicus (Rat).